The chain runs to 188 residues: Ribonuclease HII (188 aa).

In terms of domain architecture, RNase H type-2 spans 6-188 (KPLCGIDEAG…VKGLDEPTLF (183 aa)). A divalent metal cation is bound by residues aspartate 12, glutamate 13, and aspartate 99.

This sequence belongs to the RNase HII family. Mn(2+) is required as a cofactor. Mg(2+) serves as cofactor.

Its subcellular location is the cytoplasm. It carries out the reaction Endonucleolytic cleavage to 5'-phosphomonoester.. Functionally, endonuclease that specifically degrades the RNA of RNA-DNA hybrids. The polypeptide is Ribonuclease HII (Sulfurovum sp. (strain NBC37-1)).